The primary structure comprises 127 residues: Fluoride-specific ion channel FluC 1 (127 aa).

4 helical membrane-spanning segments follow: residues 4-24 (TLLAVFIGGGVGSMARWLVSL), 35-55 (VGTLIVNLVGAFIIGLTLAFF), 71-91 (TGFCGGLTTFSTFSVEVVYLI), and 101-121 (GTILLNVAGSLAMTMLAFILV). Residues glycine 75 and threonine 78 each coordinate Na(+).

This sequence belongs to the fluoride channel Fluc/FEX (TC 1.A.43) family.

The protein localises to the cell inner membrane. The enzyme catalyses fluoride(in) = fluoride(out). With respect to regulation, na(+) is not transported, but it plays an essential structural role and its presence is essential for fluoride channel function. Functionally, fluoride-specific ion channel. Important for reducing fluoride concentration in the cell, thus reducing its toxicity. The chain is Fluoride-specific ion channel FluC 1 from Yersinia pestis.